A 424-amino-acid polypeptide reads, in one-letter code: Serine--tRNA ligase (424 aa).

229–231 (TAE) is a binding site for L-serine. Position 260-262 (260-262 (RRE)) interacts with ATP. Residue E283 coordinates L-serine. 347-350 (EVSS) lines the ATP pocket. L-serine is bound at residue S383.

The protein belongs to the class-II aminoacyl-tRNA synthetase family. Type-1 seryl-tRNA synthetase subfamily. As to quaternary structure, homodimer. The tRNA molecule binds across the dimer.

The protein localises to the cytoplasm. The catalysed reaction is tRNA(Ser) + L-serine + ATP = L-seryl-tRNA(Ser) + AMP + diphosphate + H(+). It carries out the reaction tRNA(Sec) + L-serine + ATP = L-seryl-tRNA(Sec) + AMP + diphosphate + H(+). The protein operates within aminoacyl-tRNA biosynthesis; selenocysteinyl-tRNA(Sec) biosynthesis; L-seryl-tRNA(Sec) from L-serine and tRNA(Sec): step 1/1. In terms of biological role, catalyzes the attachment of serine to tRNA(Ser). Is also able to aminoacylate tRNA(Sec) with serine, to form the misacylated tRNA L-seryl-tRNA(Sec), which will be further converted into selenocysteinyl-tRNA(Sec). The polypeptide is Serine--tRNA ligase (Roseiflexus sp. (strain RS-1)).